Consider the following 415-residue polypeptide: Fructose-like permease IIC component (415 aa).

The Cytoplasmic segment spans residues 1–46 (MAIKKRSATVVPGASGAAAAVKNLQASKSSFWGELPQHVMSGISRM). Positions 35–415 (LPQHVMSGIS…RKGKLLIDSL (381 aa)) constitute a PTS EIIC type-2 domain. The helical transmembrane segment at 47–67 (VPTLIMGGVILAFSQLIAYSW) threads the bilayer. Residues 68-101 (LKIPAEIGIMDALNSGKFSGFDLSLLKFAWLSQS) lie on the Periplasmic side of the membrane. The helical transmembrane segment at 102 to 122 (FGGVLFGFAIPMFAAFVANSI) threads the bilayer. Topologically, residues 123–126 (GGKL) are cytoplasmic. Residues 127-147 (AFPAGFIGGLMSTQPTQLLNF) traverse the membrane as a helical segment. The Periplasmic portion of the chain corresponds to 148-157 (DPSTMQWATS). The helical transmembrane segment at 158–178 (SPVPSTFIGALIISIVAGYLV) threads the bilayer. Residues 179–197 (KWMNQKIQLPDFLLAFKTT) are Cytoplasmic-facing. Residues 198 to 218 (FLLPILSAIFVMLAMYYVITP) form a helical membrane-spanning segment. The Periplasmic portion of the chain corresponds to 219 to 237 (FGGWINGGIRTVLTAAGEK). Residues 238–258 (GALMYAMGIAAATAIDLGGPI) traverse the membrane as a helical segment. Over 259–276 (NKAAGFVAFSFTTDHVLP) the chain is Cytoplasmic. The chain crosses the membrane as a helical span at residues 277-297 (VTARSIAIVIPPIGLGLATII). Over 298–318 (DRRLTGKRLFNAQLYPQGKTA) the chain is Periplasmic. A helical membrane pass occupies residues 319–339 (MFLAFMGISEGAIPFALESPI). At 340–341 (TA) the chain is on the cytoplasmic side. A helical membrane pass occupies residues 342–362 (IPSYMVGAIVGSTAAVWLGAV). Topologically, residues 363-378 (QWFPESAIWAWPLVTN) are periplasmic. A helical transmembrane segment spans residues 379–399 (LGVYMAGIALGAIITALMVVF). Residues 400–415 (LRLMMFRKGKLLIDSL) lie on the Cytoplasmic side of the membrane.

The protein resides in the cell inner membrane. In terms of biological role, the phosphoenolpyruvate-dependent sugar phosphotransferase system (PTS), a major carbohydrate active -transport system, catalyzes the phosphorylation of incoming sugar substrates concomitant with their translocation across the cell membrane. The sequence is that of Fructose-like permease IIC component (fryC) from Shigella flexneri.